The sequence spans 458 residues: MRREWVAKRQGHANVSQMHYARQGIITEEMDYVAKRENLPAELIRDEVARGRMIIPANINHLNLEPMAIGIASKCKVNANIGASPNSSNLEEEVAKLNLAVKYGADTVMDLSTGGGNLDQIRTAIINASPVPIGTVPIYQALESVHGTIEKLTPDDFLHVIEKHAQQGVDYMTIHAGILIEYLPLVRNRITGIVSRGGGIIARWMLHHHKQNPLYTHFRDIIEIFKKYDVSFSLGDSLRPGCQHDASDEAQLSELKTLGQLTRKAWEHNVQVMVEGPGHVPMDQIEFNVRKQMEECSEAPFYVLGPLVTDIAPGYDHITSAIGAALAGWYGTAMLCYVTPKEHLGLPNAEDVRNGLIAYKIAAHAADIARHRPGARDRDDELSKARYNFDWNRQFELALDPDRAREYHDETLPADIYKTAEFCSMCGPKFCPMQTKVDADALTELEKFLAKQPTGTSV.

Residues Asn80, Met109, Tyr139, His175, 195 to 197 (SRG), 236 to 239 (DSLR), and Glu275 contribute to the substrate site. His279 lines the Zn(2+) pocket. Tyr302 lines the substrate pocket. His343 contacts Zn(2+). 3 residues coordinate [4Fe-4S] cluster: Cys423, Cys426, and Cys431.

This sequence belongs to the ThiC family. It depends on [4Fe-4S] cluster as a cofactor.

It carries out the reaction 5-amino-1-(5-phospho-beta-D-ribosyl)imidazole + S-adenosyl-L-methionine = 4-amino-2-methyl-5-(phosphooxymethyl)pyrimidine + CO + 5'-deoxyadenosine + formate + L-methionine + 3 H(+). It participates in cofactor biosynthesis; thiamine diphosphate biosynthesis. In terms of biological role, catalyzes the synthesis of the hydroxymethylpyrimidine phosphate (HMP-P) moiety of thiamine from aminoimidazole ribotide (AIR) in a radical S-adenosyl-L-methionine (SAM)-dependent reaction. This Cyanothece sp. (strain PCC 7425 / ATCC 29141) protein is Phosphomethylpyrimidine synthase.